The following is a 248-amino-acid chain: Ribonuclease 3 (248 aa).

Positions 16-145 constitute an RNase III domain; that stretch reads TEGLETSIGY…LLAAMYLDGG (130 aa). Residue E58 participates in Mg(2+) binding. Residue D62 is part of the active site. Mg(2+)-binding residues include N131 and E134. E134 is an active-site residue. In terms of domain architecture, DRBM spans 172–241; it reads DFKTDFQELA…ARQCLERLET (70 aa).

Belongs to the ribonuclease III family. In terms of assembly, homodimer. It depends on Mg(2+) as a cofactor.

Its subcellular location is the cytoplasm. It carries out the reaction Endonucleolytic cleavage to 5'-phosphomonoester.. In terms of biological role, digests double-stranded RNA. Involved in the processing of primary rRNA transcript to yield the immediate precursors to the large and small rRNAs (23S and 16S). Processes some mRNAs, and tRNAs when they are encoded in the rRNA operon. Processes pre-crRNA and tracrRNA of type II CRISPR loci if present in the organism. The sequence is that of Ribonuclease 3 from Geobacter sulfurreducens (strain ATCC 51573 / DSM 12127 / PCA).